The sequence spans 1850 residues: MASTLPPLGGGNGGPHTQHSLPSLPAHLQSDTHITGHLASRFHVSHPTAKLSSHALVCLNTYTSSSKGPDGGKPGSAMAGAEDMADRAWIRLGHRSENQAVVFLGESGSGKSTIRSHLLTALLDKSSTPLSNKLSLAAYVFDSLTTTKTATTPTASKSGLFYELQYDTSATTNPILIGGKLLDHRLERSRIADVPTGERNFHVLYYLLAGTSQAEKTHLGLDDGASGSRRWKYLGHPTQLKVGINDSEGFQLFKTALKKLEFPRSDIAEICQILAAILHIGQLEFESTNNTSATGDDSGGFSHEGGQTSTTVRNKDVLGIIAAFLGVSMADLQSTLGYKTKMIQKERVTVMLDPAGARAHANELARTLYSLLVAWILESVNQRICAPEEDIANTISIVDFPGFAQQTATGSTLDQLLNNAATEAIYNFTLYNFFDRKAEMLESEEVSVAPTSYFDNSDAVKGLLKPGNGLLSILDDQTRRNKTDMQFLESLRKRFEGKNPAIEVGSATAKLPGSNFYTENAAASFTVRHFAGEVEYPVKGLIEENGEVVSVDLLNMFNSTKSEFVGRLFGQDVLQTVNHPIEKSTVMQATISSKPMRAPSVMSRKGGRGRGIASQRRQQESNLFDSGNTHAESRSPKGGNKGGIDQGASGQFLSSLDNVQKAVTDPGTNAYFVFCLKPNDRRIANQFDSKCVRTQVQTFGIAEISQRLRSADFSLFLPFGEFLGMADAETILVGSERERAEMVIEEKRWPSNEVQIGSTGVFLSERCWMEIAGLVDGSAAQGRFALPSSDGYGNDGATPGERDAFGASKEQLLSGGNTPLMYGEKGKPGYFGSDDARSEAGASAIGGGDMFKNFDTREQMAERGNEKNLEEIEEFKDSPSRKRWVFTVYFLTWFIPDFLIRWIGRMPRKDVRMAWREKLAINMLIWFMCLVAAFFIVVFPMLICPKQNVFSAAELSSHNGKDGNSAYVSIRGHVIDLGSFADRHYPSFVSRKTMLNYAGMDVSSLFPVQVSALCQGTDGSVDQTVTLDYKNTNMTGSPALINSQDLNAQYHDFRYFTNDTRPDWYLEQLIMLKGNYGKGTIGYSPEYIAKLGAKRQVIASIGSRVYDLTTYTVGGRRLRTKPGESLPSDPKLADFMDRKVVELFQNQAGGDITKFWNSLALAPDVKARMQTCLDHLFYVGDVDTRNSTRCKFAEYLVLAVSILLVSVIAFKFFAALQFGGKNVPENLDKFVMCQIPAYTEDEDSLRRAIDSAARMRYDDKRKLLVIICDGMIIGQGNDRPTPRIVLDILGVSETVDPEPLSFESLGEGLKQHNMGKVYSGLYEVQGHIVPFLVIVKVGKPSEVARPGNRGKRDSQMILMRFLNRVHYNLAMSPLELEMYHQIRNIIGVNPTFYEFMLQIDADTVVAPDSATRMVSAFLDDTRLIAVCGETALTNAKSSFITMIQVYEYYISHNLSKAFESLFGSVTCLPGCFSMYRIRAAETGKPLFVSREVVDSYATIRVDTLHMKNLLHLGEDRYLTTLLLKYHSKYKTKYLFSAHAWTIAPDSWKVFLSQRRRWINSTVHNLIELIPMAQLCGFCCFSMRFVVFIDLLSTVVQPVTIAYIVYLIVLVATKTTVVPITAFILLGAIYGLQAIIFILRRKWEMVGWMILYVMAVPVFSFGLPLYAFWHMDDFNWGTTRVVAGEKGKKVVISDEGKFDPSSIPRKKWEEYQAELWETQTSRDDSRSEISGISYGTKAQAVVSEYGFPSRPDSTTGFAAHALPYDSRNNSRMSLAHSDMGHHRMSQFGGSQFFNPDDMVGLPSDDALLAEIRDILKTADLMTVTKKGIKQELERRFDVPLDAKRAYINSGK.

Residues 1–27 (MASTLPPLGGGNGGPHTQHSLPSLPAH) form a disordered region. The Myosin motor domain occupies 1–779 (MASTLPPLGG…EIAGLVDGSA (779 aa)). ATP is bound at residue 105–112 (GESGSGKS). N-linked (GlcNAc...) asparagine glycans are attached at residues Asn245, Asn290, Asn427, Asn481, and Asn558. The disordered stretch occupies residues 289-309 (NNTSATGDDSGGFSHEGGQTS). The tract at residues 593 to 647 (SKPMRAPSVMSRKGGRGRGIASQRRQQESNLFDSGNTHAESRSPKGGNKGGIDQG) is disordered. Polar residues predominate over residues 620–630 (ESNLFDSGNTH). The actin-binding stretch occupies residues 656 to 680 (LDNVQKAVTDPGTNAYFVFCLKPND). The next 2 membrane-spanning stretches (helical) occupy residues 884-904 (WVFT…RWIG) and 923-943 (MLIW…PMLI). One can recognise a Cytochrome b5 heme-binding domain in the interval 947–1006 (QNVFSAAELSSHNGKDGNSAYVSIRGHVIDLGSFADRHYPSFVSRKTMLNYAGMDVSSLF). N-linked (GlcNAc...) asparagine glycans are attached at residues Asn1033, Asn1058, and Asn1186. A helical membrane pass occupies residues 1196-1216 (LVLAVSILLVSVIAFKFFAAL). Residues Asn1453 and Asn1559 are each glycosylated (N-linked (GlcNAc...) asparagine). The next 4 membrane-spanning stretches (helical) occupy residues 1568-1588 (LIPM…VVFI), 1590-1610 (LLST…IVLV), 1617-1637 (VPIT…IIFI), and 1644-1664 (MVGW…GLPL). The N-linked (GlcNAc...) asparagine glycan is linked to Asn1767. The 51-residue stretch at 1800-1850 (LPSDDALLAEIRDILKTADLMTVTKKGIKQELERRFDVPLDAKRAYINSGK) folds into the DEK-C domain.

In the N-terminal section; belongs to the TRAFAC class myosin-kinesin ATPase superfamily. Myosin family. This sequence in the C-terminal section; belongs to the chitin synthase family. Class V subfamily. In terms of tissue distribution, expressed in conidia and during appressorium formation.

It localises to the cell membrane. It is found in the cell septum. Its subcellular location is the cell tip. The catalysed reaction is [(1-&gt;4)-N-acetyl-beta-D-glucosaminyl](n) + UDP-N-acetyl-alpha-D-glucosamine = [(1-&gt;4)-N-acetyl-beta-D-glucosaminyl](n+1) + UDP + H(+). In terms of biological role, polymerizes chitin, a structural polymer of the cell wall and septum, by transferring the sugar moiety of UDP-GlcNAc to the non-reducing end of the growing chitin polymer. Contributes to the production of conidia and the ability of fungal conidia to germinate. Involved in the fungal cell wall integrity and the ability of conidia to withstand biophysical pressure. Required for appressorium formation and evasion of insect cellular and/or humoral defenses, promoting the fungal dimorphic transition to the production of hyphal bodies that occurs within hosts, and ultimately to virulence. The sequence is that of Chitin synthase V from Metarhizium acridum (strain CQMa 102).